The chain runs to 350 residues: Arabinogalactan endo-beta-1,4-galactanase A (350 aa).

Positions 1 to 16 (MIYPLLLSALPLLSSA) are cleaved as a signal peptide. N-linked (GlcNAc...) asparagine glycosylation occurs at N128. Residue E152 is the Proton donor of the active site. The active-site Nucleophile is E262.

The protein belongs to the glycosyl hydrolase 53 family.

The protein localises to the secreted. It catalyses the reaction The enzyme specifically hydrolyzes (1-&gt;4)-beta-D-galactosidic linkages in type I arabinogalactans.. Its function is as follows. Endogalactanase involved in the degradation of plant cell wall polysaccharides, and more particularly of hairy regions of pectin. The protein is Arabinogalactan endo-beta-1,4-galactanase A (galA) of Aspergillus niger.